Here is a 180-residue protein sequence, read N- to C-terminus: Large ribosomal subunit protein uL6 (180 aa).

Positions 158 to 180 are disordered; sequence YSGKGISYKGEKIRRKEGKTASK.

This sequence belongs to the universal ribosomal protein uL6 family. In terms of assembly, part of the 50S ribosomal subunit.

Functionally, this protein binds to the 23S rRNA, and is important in its secondary structure. It is located near the subunit interface in the base of the L7/L12 stalk, and near the tRNA binding site of the peptidyltransferase center. This chain is Large ribosomal subunit protein uL6, found in Mycoplasmopsis synoviae (strain 53) (Mycoplasma synoviae).